A 338-amino-acid polypeptide reads, in one-letter code: Putative peptide import ATP-binding protein BOV_A0348 (338 aa).

The 254-residue stretch at 10 to 263 (KGLRTVFRTR…PRHPYTMGLL (254 aa)) folds into the ABC transporter domain. 43–50 (GESGSGKS) is an ATP binding site.

The protein belongs to the ABC transporter superfamily. The complex is composed of two ATP-binding proteins (BOV_A0347 and BOV_A0348), two transmembrane proteins (BOV_A0350 and BOV_A0351) and a solute-binding protein (BOV_A0352).

It localises to the cell inner membrane. Its function is as follows. Probably part of an ABC transporter complex that could be involved in peptide import. Probably responsible for energy coupling to the transport system. This chain is Putative peptide import ATP-binding protein BOV_A0348, found in Brucella ovis (strain ATCC 25840 / 63/290 / NCTC 10512).